A 387-amino-acid polypeptide reads, in one-letter code: MSVIKMTDLDLAGKRVLIRADLNVPVKEGKVTSDARIRASLPTIELALKQGAKVMVTSHLGRPTEGEYNEEFSLLPVVNYLKDKLNSPVRLAKDYLDGVEVAEGELVVLENVRFNKGEKKDDETLAKKYASLCDVFVMDAFGTAHRAQASTHGVAKFADVACAGPLLAEELDALGKALKEPARPMVAIVGGSKVSTKLTVLDSLSKIADQLIVGGGIANTFVAAQGHNVGKSLYEADLVDEAKRLLGTCDIPVPTDVRVATEFSETAPATLKSVTEIKDEEQILDMGDVSAEKLAEILKNAKTILWNGPVGVFEFPNFRKGTEIVARAIAESDAFSIAGGGDTLAAIDMFGIADKISYISTGGGAFLEFVEGKVLPAVAMLEERAKK.

Substrate-binding positions include 21-23, R36, 59-62, R113, and R146; these read DLN and HLGR. ATP contacts are provided by residues K197, E314, and 340–343; that span reads GGDT.

Belongs to the phosphoglycerate kinase family. Monomer.

The protein resides in the cytoplasm. It carries out the reaction (2R)-3-phosphoglycerate + ATP = (2R)-3-phospho-glyceroyl phosphate + ADP. It participates in carbohydrate degradation; glycolysis; pyruvate from D-glyceraldehyde 3-phosphate: step 2/5. This is Phosphoglycerate kinase from Cronobacter sakazakii (strain ATCC BAA-894) (Enterobacter sakazakii).